The sequence spans 740 residues: Elongation factor 2 (740 aa).

In terms of domain architecture, tr-type G spans 23–264 (AQIRNAGTLA…MIIEHVPPPN (242 aa)). GTP contacts are provided by residues 32 to 39 (AHVDHGKT), 98 to 102 (DTPGH), and 152 to 155 (NKID). H605 carries the diphthamide modification.

This sequence belongs to the TRAFAC class translation factor GTPase superfamily. Classic translation factor GTPase family. EF-G/EF-2 subfamily.

The protein localises to the cytoplasm. In terms of biological role, catalyzes the GTP-dependent ribosomal translocation step during translation elongation. During this step, the ribosome changes from the pre-translocational (PRE) to the post-translocational (POST) state as the newly formed A-site-bound peptidyl-tRNA and P-site-bound deacylated tRNA move to the P and E sites, respectively. Catalyzes the coordinated movement of the two tRNA molecules, the mRNA and conformational changes in the ribosome. In Pyrobaculum calidifontis (strain DSM 21063 / JCM 11548 / VA1), this protein is Elongation factor 2.